The following is a 1112-amino-acid chain: Constitutive coactivator of PPAR-gamma-like protein 1 (1112 aa).

The segment at 339-403 (PPHYLARPNP…YSLSEPALTL (65 aa)) is interaction with YES1, SRC and FYN. Residues 372-525 (QAKPAVPQVP…GKGSHMGTVQ (154 aa)) are disordered. 2 stretches are compositionally biased toward polar residues: residues 403-418 (LDTS…SYSN) and 433-445 (SPIN…SPNH). The span at 479–500 (GWEKTGSHAEPLARGDPGDQVK) shows a compositional bias: basic and acidic residues. Polar residues predominate over residues 503-512 (GSSTASSGSQ). Thr-653 bears the Phosphothreonine mark. Residues 827-1112 (AEQAAKVEKM…LEAAVLNKEE (286 aa)) are RNA binding. Omega-N-methylarginine occurs at positions 871, 882, and 884. A disordered region spans residues 919–943 (AFSGSDSSRTSKSQGGVQPIPSQGG). Positions 922 to 934 (GSDSSRTSKSQGG) are enriched in polar residues. The residue at position 930 (Lys-930) is an N6-acetyllysine. Ser-958 carries the post-translational modification Phosphoserine. Omega-N-methylarginine occurs at positions 980 and 984. Phosphoserine occurs at positions 1021 and 1042. Positions 1030–1090 (KSKSGESKSS…PCNTNPHLNA (61 aa)) are disordered. The segment covering 1070 to 1090 (HSESALNNDSKPCNTNPHLNA) has biased composition (polar residues).

Belongs to the constitutive coactivator of PPAR-gamma family. In terms of assembly, interacts with PURA. Interacts with SRC family protein kinases YES1, SRC and FYN. Upon tyrosine phosphorylation, interacts with PIK3R1. Interacts with IGF2BP1/IMP-1 in an RNA-dependent manner. In terms of processing, arg-980 is dimethylated, probably to asymmetric dimethylarginine. Phosphorylated on tyrosine by src family kinases upon ultraviolet exposure. As to expression, in the brain, predominantly expressed in the hippocampus, caudate putamen, cerebral cortex and cerebellum. Expression is restricted to neurons (at protein level).

The protein localises to the cytoplasm. The protein resides in the cell membrane. Its function is as follows. Component of the oxidative stress-induced survival signaling. May regulate the activation of SRC family protein kinases. May act as a scaffolding protein enabling SRC family protein kinases to phosphorylate and activate PI3-kinase. Binds IGF2 RNA and promotes the production of IGF2 protein. The sequence is that of Constitutive coactivator of PPAR-gamma-like protein 1 (FAM120A) from Mus musculus (Mouse).